The sequence spans 105 residues: Heat shock protein HspQ (105 aa).

Positions 84 to 105 are disordered; sequence QPKLDELSASIKKQLKTPRLRN. Basic residues predominate over residues 96–105; it reads KQLKTPRLRN.

The protein belongs to the HspQ family.

Its subcellular location is the cytoplasm. In terms of biological role, involved in the degradation of certain denaturated proteins, including DnaA, during heat shock stress. This chain is Heat shock protein HspQ, found in Wigglesworthia glossinidia brevipalpis.